The sequence spans 379 residues: S-adenosylmethionine decarboxylase proenzyme (379 aa).

Residues Glu-30 and Glu-33 contribute to the active site. Ser-96 functions as the Schiff-base intermediate with substrate; via pyruvic acid in the catalytic mechanism. Position 96 is a pyruvic acid (Ser); by autocatalysis (Ser-96). Catalysis depends on Cys-110, which acts as the Proton donor; for catalytic activity. Residues Ser-254 and His-267 each act as proton acceptor; for processing activity in the active site.

It belongs to the eukaryotic AdoMetDC family. Heterotetramer of two alpha and two beta chains. Pyruvate serves as cofactor. Is synthesized initially as an inactive proenzyme. Formation of the active enzyme involves a self-maturation process in which the active site pyruvoyl group is generated from an internal serine residue via an autocatalytic post-translational modification. Two non-identical subunits are generated from the proenzyme in this reaction, and the pyruvate is formed at the N-terminus of the alpha chain, which is derived from the carboxyl end of the proenzyme. The post-translation cleavage follows an unusual pathway, termed non-hydrolytic serinolysis, in which the side chain hydroxyl group of the serine supplies its oxygen atom to form the C-terminus of the beta chain, while the remainder of the serine residue undergoes an oxidative deamination to produce ammonia and the pyruvoyl group blocking the N-terminus of the alpha chain.

The enzyme catalyses S-adenosyl-L-methionine + H(+) = S-adenosyl 3-(methylsulfanyl)propylamine + CO2. It participates in amine and polyamine biosynthesis; S-adenosylmethioninamine biosynthesis; S-adenosylmethioninamine from S-adenosyl-L-methionine: step 1/1. In terms of biological role, S-adenosylmethionine decarboxylase is essential for the biosynthesis of spermine and spermidine. The alpha subunit contains the active site. The chain is S-adenosylmethionine decarboxylase proenzyme (amd1) from Dictyostelium discoideum (Social amoeba).